The primary structure comprises 1022 residues: Sodium/potassium-transporting ATPase subunit alpha-1 (1022 aa).

A propeptide spanning residues 1–5 (MGRGT) is cleaved from the precursor. Basic and acidic residues predominate over residues 1–10 (MGRGTGHDQY). The interval 1–34 (MGRGTGHDQYELAATSEGGRKKKRDKKKKDMDDL) is disordered. At 6–86 (GHDQYELAAT…NALTPPPTTP (81 aa)) the chain is on the cytoplasmic side. A Phosphoserine; by PKC modification is found at Ser16. Positions 81-83 (PPP) are interaction with phosphoinositide-3 kinase. The helical transmembrane segment at 87–107 (EWVKFCRQLFGGFSMLLWIGA) threads the bilayer. The Extracellular portion of the chain corresponds to 108-130 (ILCFLAYGIQAASEDEPANDNLY). A helical transmembrane segment spans residues 131 to 151 (LGVVLSAVVIITGCFSYYQEA). The Cytoplasmic segment spans residues 152–287 (KSSRIMDSFK…VGRTPISIEI (136 aa)). A disordered region spans residues 213–234 (DNSSLTGESEPQTRSPDFSNEN). Residues 288–307 (EHFIHIITGVAVFLGVSFFI) form a helical membrane-spanning segment. Over 308-319 (LSLILGYAWLEA) the chain is Extracellular. Residues 320 to 337 (VIFLIGIIVANVPEGLLA) traverse the membrane as a helical segment. Residues 338–771 (TVTVCLTLTA…EEGRLIFDNL (434 aa)) are Cytoplasmic-facing. Residue Asp375 is the 4-aspartylphosphate intermediate of the active site. ATP is bound at residue Lys486. Residues Asp716 and Asp720 each coordinate Mg(2+). Residues 772–791 (KKSIAYTLTSNIPEITPFLL) traverse the membrane as a helical segment. The Extracellular portion of the chain corresponds to 792–801 (FIIANIPLPL). The helical transmembrane segment at 802–822 (GTVTILCIDLGTDMVPAISLA) threads the bilayer. Over 823–842 (YEAAESDIMKRQPRNPRTDK) the chain is Cytoplasmic. A helical membrane pass occupies residues 843-865 (LVNERLISIAYGQIGMMQATAGF). Topologically, residues 866-917 (FTYFVILAENGFLPSTLLGIRVKWDDKYVNDLEDSYGQQWTYEQRKIVEYTC) are extracellular. The chain crosses the membrane as a helical span at residues 918–937 (HTSFFASIVIVQWADLIICK). The Cytoplasmic portion of the chain corresponds to 938–950 (TRRNSIIQQGMKN). A Phosphoserine; by PKA modification is found at Ser942. A helical membrane pass occupies residues 951 to 969 (KILIFGLFEETALAAFLSY). Topologically, residues 970 to 984 (CPGMDVALRMYPLKP) are extracellular. A helical membrane pass occupies residues 985 to 1005 (SWWFCAFPYSLLIFLYDEARR). The Cytoplasmic portion of the chain corresponds to 1006–1022 (FILRRNPDGWVERETYY).

Belongs to the cation transport ATPase (P-type) (TC 3.A.3) family. Type IIC subfamily. In terms of assembly, the sodium/potassium-transporting ATPase is composed of a catalytic alpha subunit, an auxiliary non-catalytic beta subunit and an additional regulatory subunit.

It is found in the cell membrane. The protein localises to the sarcolemma. The catalysed reaction is K(+)(out) + Na(+)(in) + ATP + H2O = K(+)(in) + Na(+)(out) + ADP + phosphate + H(+). Functionally, this is the catalytic component of the active enzyme, which catalyzes the hydrolysis of ATP coupled with the exchange of sodium and potassium ions across the plasma membrane. This action creates the electrochemical gradient of sodium and potassium ions, providing the energy for active transport of various nutrients. The chain is Sodium/potassium-transporting ATPase subunit alpha-1 (atp1a1) from Anguilla anguilla (European freshwater eel).